We begin with the raw amino-acid sequence, 359 residues long: NADH-quinone oxidoreductase subunit H (359 aa).

8 consecutive transmembrane segments (helical) span residues 16 to 36 (IWPA…CVLL), 94 to 114 (GLFV…WAVI), 129 to 149 (LLFL…AGWA), 167 to 187 (VSYE…SASL), 208 to 228 (FLSW…ISGL), 261 to 281 (FFLA…ILFL), 296 to 316 (IPGW…FLWV), and 331 to 351 (LGWK…GAWM).

It belongs to the complex I subunit 1 family. In terms of assembly, NDH-1 is composed of 14 different subunits. Subunits NuoA, H, J, K, L, M, N constitute the membrane sector of the complex.

It is found in the cell inner membrane. It carries out the reaction a quinone + NADH + 5 H(+)(in) = a quinol + NAD(+) + 4 H(+)(out). In terms of biological role, NDH-1 shuttles electrons from NADH, via FMN and iron-sulfur (Fe-S) centers, to quinones in the respiratory chain. The immediate electron acceptor for the enzyme in this species is believed to be ubiquinone. Couples the redox reaction to proton translocation (for every two electrons transferred, four hydrogen ions are translocated across the cytoplasmic membrane), and thus conserves the redox energy in a proton gradient. This subunit may bind ubiquinone. The protein is NADH-quinone oxidoreductase subunit H of Polaromonas sp. (strain JS666 / ATCC BAA-500).